A 2297-amino-acid chain; its full sequence is MDGDGGRRDVPGTLMEPGRGAGPAGMAEPRAKAARPGPQRFLRRSVVESDQEEPPGLEAAEAPGPQPPQPLQRRVLLLCKTRRLIAERARGRPAAPAPAALVAQPGAPGAPADAGPEPVGTQEPGPDPIAAAVETAPAPDGGPREEAAATVRKEDEGAAEAKPEPGRTRRDEPEEEEDDEDDLKAVATSLDGRFLKFDIELGRGSFKTVYKGLDTETWVEVAWCELQDRKLTKLERQRFKEEAEMLKGLQHPNIVRFYDFWESSAKGKRCIVLVTELMTSGTLKTYLKRFKVMKPKVLRSWCRQILKGLLFLHTRTPPIIHRDLKCDNIFITGPTGSVKIGDLGLATLKRASFAKSVIGTPEFMAPEMYEEHYDESVDVYAFGMCMLEMATSEYPYSECQNAAQIYRKVTCGIKPASFEKVHDPEIKEIIGECICKNKEERYEIKDLLSHAFFAEDTGVRVELAEEDHGRKSTIALRLWVEDPKKLKGKPKDNGAIEFTFDLEKETPDEVAQEMIESGFFHESDVKIVAKSIRDRVALIQWRRERIWPALQPKEQQDVGSPDKARGPPVPLQVQVTYHAQAGQPGPPEPEEPEADQHLLPPTLPTSATSLASDSTFDSGQGSTVYSDSQSSQQSVMLGSLADAAPSPAQCVCSPPVSEGPVLPQSLPSLGAYQQPTAAPGLPVGSVPAPACPPSLQQHFPDPAMSFAPVLPPPSTPMPTGPGQPAPPGQQPPPLAQPTPLPQVLAPQPVVPLQPVPPHLPPYLAPASQVGAPAQLKPLQMPQAPLQPLAQVPPQMPPIPVVPPITPLAGIDGLPPALPDLPTATVPPVPPPQYFSPAVILPSLAAPLPPASPALPLQAVKLPHPPGAPLAMPCRTIVPNAPATIPLLAVAPPGVAALSIHSAVAQLPGQPVYPAAFPQMAPTDVPPSPHHTVQNMRATPPQPALPPQPTLPPQPVLPPQPTLPPQPVLPPQPTRPPQPVLPPQPMLPPQPVLPPQPALPVRPEPLQPHLPEQAAPAATPGSQILLGHPAPYAVDVAAQVPTVPVPPAAVLSPPLPEVLLPAAPELLPQFPSSLATVSASVQSVPTQTATLLPPANPPLPGGPGIASPCPTVQLTVEPVQEEQASQDKPPGLPQSCESYGGSDVTSGKELSDSCEGAFGGGRLEGRAARKHHRRSTRARSRQERASRPRLTILNVCNTGDKMVECQLETHNHKMVTFKFDLDGDAPDEIATYMVEHDFILQAERETFIEQMKDVMDKAEDMLSEDTDADRGSDPGTSPPHLSTCGLGTGEESRQSQANAPVYQQNVLHTGKRWFIICPVAEHPAPEAPESSPPLPLSSLPPEASQGPCRGLTLPCLPWRRAACGAVFLSLFSAESAQSKQPPDSAPYKDQLSSKEQPSFLASQQLLSQAGPSNPPGAPPAPLAPSSPPVTALPQDGAAPATSTMPEPASGTASQAGGPGTPQGLTSELETSQPLAETHEAPLAVQPLVVGLAPCTPAPEAASTRDASAPREPLPPPAPEPSPHSGTPQPALGQPAPLLPAAVGAVSLATSQLPSPPLGPTVPPQPPSALESDGEGPPPRVGFVDSTIKSLDEKLRTLLYQEHVPTSSASAGTPVEVGDRDFTLEPLRGDQPRSEVCGGDLALPPVPKEAVSGRVQLPQPLVEKSELAPTRGAVMEQGTSSSMTAESSPRSMLGYDRDGRQVASDSHVVPSVPQDVPAFVRPARVEPTDRDGGEAGESSAEPPPSDMGTVGGQASHPQTLGARALGSPRKRPEQQDVSSPAKTVGRFSVVSTQDEWTLASPHSLRYSAPPDVYLDEAPSSPDVKLAVRRAQTASSIEVGVGEPVSSDSGDEGPRARPPVQKQASLPVSGSVAGDFVKKATAFLQRPSRAGSLGPETPSRVGMKVPTISVTSFHSQSSYISSDNDSELEDADIKKELQSLREKHLKEISELQSQQKQEIEALYRRLGKPLPPNVGFFHTAPPTGRRRKTSKSKLKAGKLLNPLVRQLKVVASSTGHLADSSRGPPAKDPAQASVGLTADSTGLSGKAVQTQQPCSVRASLSSDICSGLASDGGGARGQGWTVYHPTSERVTYKSSSKPRARFLSGPVSVSIWSALKRLCLGKEHSSRSSTSSLAPGPEPGPQPALHVQAQVNNSNNKKGTFTDDLHKLVDEWTSKTVGAAQLKPTLNQLKQTQKLQDMEAQAGWAAPGEARAMTAPRAGVGMPRLPPAPGPLSTTVIPGAAPTLSVPTPDGALGTARRNQVWFGLRVPPTACCGHSTQPRGGQRVGSKTASFAASDPVRS.

Residues methionine 1–valine 10 show a composition bias toward basic and acidic residues. 2 disordered regions span residues methionine 1–valine 75 and alanine 89–leucine 183. Omega-N-methylarginine occurs at positions 19 and 30. The residue at position 45 (serine 45) is a Phosphoserine. Positions arginine 92–glycine 120 are enriched in low complexity. Positions glycine 142–glutamate 172 are enriched in basic and acidic residues. The span at proline 173–aspartate 182 shows a compositional bias: acidic residues. Residues leucine 195 to phenylalanine 453 form the Protein kinase domain. ATP contacts are provided by residues serine 205, threonine 275 to methionine 278, and lysine 325. The active-site Proton acceptor is aspartate 342. Phosphoserine; by autocatalysis occurs at positions 352 and 356. Serine 560 carries the post-translational modification Phosphoserine. 8 disordered regions span residues alanine 579–serine 630, phenylalanine 699–proline 751, proline 917–glutamine 1022, proline 1117–serine 1185, serine 1262–asparagine 1297, alanine 1323–glycine 1345, serine 1374–proline 1480, and proline 1492–isoleucine 1586. Over residues proline 604–tyrosine 625 the composition is skewed to polar residues. Pro residues-rich tracts occupy residues valine 709–leucine 740 and proline 939–proline 1007. The residue at position 1150 (serine 1150) is a Phosphoserine. Basic residues predominate over residues alanine 1167 to arginine 1178. Serine 1262 is subject to Phosphoserine. Residues serine 1392–serine 1406 show a composition bias toward polar residues. A compositionally biased stretch (pro residues) spans serine 1411–proline 1426. 2 stretches are compositionally biased toward polar residues: residues alanine 1439 to glutamine 1453 and glutamine 1461 to leucine 1473. Residues glutamate 1510–serine 1520 are compositionally biased toward pro residues. Residues proline 1526–valine 1544 show a composition bias toward low complexity. A compositionally biased stretch (pro residues) spans proline 1552 to proline 1565. Position 1588 is a phosphoserine (serine 1588). The span at threonine 1621 to arginine 1631 shows a compositional bias: basic and acidic residues. A disordered region spans residues threonine 1621 to valine 1865. The span at glutamine 1675–arginine 1688 shows a compositional bias: polar residues. At serine 1685 the chain carries Phosphoserine. Positions alanine 1721 to glycine 1731 are enriched in basic and acidic residues. Residues serine 1736, serine 1817, serine 1818, serine 1862, and serine 1889 each carry the phosphoserine modification. Disordered stretches follow at residues asparagine 1970–lysine 1990 and threonine 2011–valine 2031. The span at glycine 1981 to lysine 1990 shows a compositional bias: basic residues. Position 2067 is a phosphoserine (serine 2067). 2 disordered regions span residues serine 2123–leucine 2142 and cysteine 2269–serine 2297. A compositionally biased stretch (polar residues) spans histidine 2272 to phenylalanine 2289.

Belongs to the protein kinase superfamily. Ser/Thr protein kinase family. WNK subfamily. Forms a complex with the phosphorylated form of STK39. It depends on Mg(2+) as a cofactor. In terms of processing, autophosphorylated. Autophosphorylation at Ser-352 and Ser-356 promotes its activity. Expressed in various cancer cell lines (at protein level). Predominantly expressed in heart, brain, skeletal muscle and colon.

The protein localises to the cytoplasm. It localises to the cell membrane. The catalysed reaction is L-seryl-[protein] + ATP = O-phospho-L-seryl-[protein] + ADP + H(+). It catalyses the reaction L-threonyl-[protein] + ATP = O-phospho-L-threonyl-[protein] + ADP + H(+). Activation requires autophosphorylation of Ser-356 and, to a lower extent, Ser-352. Its function is as follows. Serine/threonine-protein kinase component of the WNK2-SPAK/OSR1 kinase cascade, which plays an important role in the regulation of electrolyte homeostasis, cell signaling, survival, and proliferation. The WNK2-SPAK/OSR1 kinase cascade is composed of WNK2, which mediates phosphorylation and activation of downstream kinases OXSR1/OSR1 and STK39/SPAK. Following activation, OXSR1/OSR1 and STK39/SPAK catalyze phosphorylation of ion cotransporters, regulating their activity. Acts as an activator and inhibitor of sodium-coupled chloride cotransporters and potassium-coupled chloride cotransporters respectively. Activates SLC12A2, SCNN1A, SCNN1B, SCNN1D and SGK1 and inhibits SLC12A5. Negatively regulates the EGF-induced activation of the ERK/MAPK-pathway and the downstream cell cycle progression. Affects MAPK3/MAPK1 activity by modulating the activity of MAP2K1 and this modulation depends on phosphorylation of MAP2K1 by PAK1. WNK2 acts by interfering with the activity of PAK1 by controlling the balance of the activity of upstream regulators of PAK1 activity, RHOA and RAC1, which display reciprocal activity. The protein is Serine/threonine-protein kinase WNK2 of Homo sapiens (Human).